The primary structure comprises 270 residues: Glucosamine-6-phosphate deaminase (270 aa).

The active-site Proton acceptor; for enolization step is aspartate 68. The active-site For ring-opening step is aspartate 145. Histidine 147 functions as the Proton acceptor; for ring-opening step in the catalytic mechanism. Glutamate 152 serves as the catalytic For ring-opening step.

The protein belongs to the glucosamine/galactosamine-6-phosphate isomerase family. NagB subfamily.

The enzyme catalyses alpha-D-glucosamine 6-phosphate + H2O = beta-D-fructose 6-phosphate + NH4(+). It functions in the pathway amino-sugar metabolism; N-acetylneuraminate degradation; D-fructose 6-phosphate from N-acetylneuraminate: step 5/5. Its function is as follows. Catalyzes the reversible isomerization-deamination of glucosamine 6-phosphate (GlcN6P) to form fructose 6-phosphate (Fru6P) and ammonium ion. This is Glucosamine-6-phosphate deaminase from Bifidobacterium longum subsp. infantis (strain ATCC 15697 / DSM 20088 / JCM 1222 / NCTC 11817 / S12).